The sequence spans 219 residues: Steroid receptor RNA activator 1 (219 aa).

Disordered regions lie at residues 1–90 (MAEL…SSPV) and 192–219 (SLSSEENKEEKSTVAPENQTIPGFQPSS). Polar residues predominate over residues 23–32 (YGLQTQTGGT). Phosphoserine is present on Ser-48. A compositionally biased stretch (pro residues) spans 55 to 76 (SGPPPVDHPPPSSKASRPPPMG). Basic and acidic residues predominate over residues 192–203 (SLSSEENKEEKS). Residues 206 to 219 (APENQTIPGFQPSS) show a composition bias toward polar residues.

The protein belongs to the SRA1 family. SRA1 RNA exists in a ribonucleoprotein complex containing NCOA1. The RNA also forms a complex with PUS1 and RARG in the nucleus. Interacts with AR. In terms of tissue distribution, expressed in various prostate cancer cell lines.

The protein localises to the nucleus. It localises to the cytoplasm. Functionally, functional RNA which acts as a transcriptional coactivator that selectively enhances steroid receptor-mediated transactivation ligand-independently through a mechanism involving the modulating N-terminal domain (AF-1) of steroid receptors. Also mediates transcriptional coactivation of steroid receptors ligand-dependently through the steroid-binding domain (AF-2). Enhances cellular proliferation and differentiation and promotes apoptosis in vivo. May play a role in tumorigenesis. The protein is Steroid receptor RNA activator 1 of Rattus norvegicus (Rat).